We begin with the raw amino-acid sequence, 463 residues long: Putative protein FAM90A2P (463 aa).

Disordered regions lie at residues 1–42 (MTAR…DPRL), 67–115 (ALVP…PQRK), 150–295 (MPVH…PAQA), and 326–365 (ALENLQPPPAATELGPSTSPQMGRRTPAQVPGVDRQPPHS). 3 stretches are compositionally biased toward basic and acidic residues: residues 74-83 (GKKEGKENLK), 97-114 (NKDKGEKEERPRQQDPQR), and 159-170 (PCVDPELADRSA). Residues 180 to 198 (LASLSPLRKASLRSSSSLG) are compositionally biased toward low complexity.

This sequence belongs to the FAM90 family.

The protein is Putative protein FAM90A2P (FAM90A2P) of Homo sapiens (Human).